We begin with the raw amino-acid sequence, 160 residues long: Photosystem II extrinsic protein V (160 aa).

Positions 1-25 are cleaved as a signal peptide; it reads MKRFFLVAIASVLFFFNTMVGSANA. Heme c contacts are provided by Cys62, Cys65, His66, and His117.

This sequence belongs to the cytochrome c family. PsbV subfamily. As to quaternary structure, PSII is composed of 1 copy each of membrane proteins PsbA, PsbB, PsbC, PsbD, PsbE, PsbF, PsbH, PsbI, PsbJ, PsbK, PsbL, PsbM, PsbT, PsbX, PsbY, PsbZ, Psb30/Ycf12, peripheral proteins PsbO, CyanoQ (PsbQ), PsbU, PsbV and a large number of cofactors. It forms dimeric complexes. The cyanobacterial oxygen-evolving complex is composed of PsbO, CyanoQ (PsbQ), PsbV and PsbU. Requires heme c as cofactor.

The protein resides in the cellular thylakoid membrane. One of the extrinsic, lumenal subunits of photosystem II (PSII). PSII is a light-driven water plastoquinone oxidoreductase, using light energy to abstract electrons from H(2)O, generating a proton gradient subsequently used for ATP formation. The extrinsic proteins stabilize the structure of photosystem II oxygen-evolving complex (OEC), the ion environment of oxygen evolution and protect the OEC against heat-induced inactivation. Low-potential cytochrome c that plays a role in the OEC of PSII, required for normal function or stabilization of PSII. In Synechocystis sp. (strain ATCC 27184 / PCC 6803 / Kazusa), this protein is Photosystem II extrinsic protein V.